A 304-amino-acid polypeptide reads, in one-letter code: Splicing factor U2af small subunit B (304 aa).

The segment at 12–40 (EKDRVNCPFYFKIGACRHGDRCSRLHNRP) adopts a C3H1-type 1 zinc-finger fold. Residues 44-146 (PTIVLANMYQ…RPIIVEYSPV (103 aa)) enclose the RRM domain. The C3H1-type 2 zinc-finger motif lies at 148–175 (DFREATCRQFEENSCNRGGYCNFMHVKQ). The segment covering 184-207 (LYGGRSRRSHGRSRSPSPRHRRGN) has biased composition (basic residues). The interval 184 to 304 (LYGGRSRRSH…QWNREREEKP (121 aa)) is disordered. The segment covering 208–220 (RDRDDFRRERDGY) has biased composition (basic and acidic residues). The segment covering 221–258 (RGGGDGYRGGGGGGGGDGYRGGDSYRGGGGGGRRGGGS) has biased composition (gly residues). The segment covering 268-280 (RRRHGSPPRRARS) has biased composition (basic residues). Over residues 281–304 (PVRESSEERRAKIEQWNREREEKP) the composition is skewed to basic and acidic residues.

It belongs to the splicing factor SR family.

The protein resides in the nucleus. Its function is as follows. Necessary for the splicing of pre-mRNA. This chain is Splicing factor U2af small subunit B (U2AF35B), found in Oryza sativa subsp. japonica (Rice).